Consider the following 268-residue polypeptide: Ribosomal RNA small subunit methyltransferase A (268 aa).

S-adenosyl-L-methionine is bound by residues Asn11, Leu13, Gly37, Glu58, Asp86, and Asn104.

Belongs to the class I-like SAM-binding methyltransferase superfamily. rRNA adenine N(6)-methyltransferase family. RsmA subfamily.

The protein resides in the cytoplasm. The catalysed reaction is adenosine(1518)/adenosine(1519) in 16S rRNA + 4 S-adenosyl-L-methionine = N(6)-dimethyladenosine(1518)/N(6)-dimethyladenosine(1519) in 16S rRNA + 4 S-adenosyl-L-homocysteine + 4 H(+). Functionally, specifically dimethylates two adjacent adenosines (A1518 and A1519) in the loop of a conserved hairpin near the 3'-end of 16S rRNA in the 30S particle. May play a critical role in biogenesis of 30S subunits. The chain is Ribosomal RNA small subunit methyltransferase A from Campylobacter fetus subsp. fetus (strain 82-40).